The chain runs to 73 residues: Translation initiation factor IF-1 (73 aa).

The S1-like domain occupies 1-73; that stretch reads MAKKEDTIVL…TKARVVYRHR (73 aa).

The protein belongs to the IF-1 family. In terms of assembly, component of the 30S ribosomal translation pre-initiation complex which assembles on the 30S ribosome in the order IF-2 and IF-3, IF-1 and N-formylmethionyl-tRNA(fMet); mRNA recruitment can occur at any time during PIC assembly.

It localises to the cytoplasm. In terms of biological role, one of the essential components for the initiation of protein synthesis. Stabilizes the binding of IF-2 and IF-3 on the 30S subunit to which N-formylmethionyl-tRNA(fMet) subsequently binds. Helps modulate mRNA selection, yielding the 30S pre-initiation complex (PIC). Upon addition of the 50S ribosomal subunit IF-1, IF-2 and IF-3 are released leaving the mature 70S translation initiation complex. The sequence is that of Translation initiation factor IF-1 from Chlamydia abortus (strain DSM 27085 / S26/3) (Chlamydophila abortus).